Consider the following 274-residue polypeptide: Thymidylate synthase (274 aa).

Residue R21 participates in dUMP binding. H51 contacts (6R)-5,10-methylene-5,6,7,8-tetrahydrofolate. Residue 123 to 124 (RR) participates in dUMP binding. C156 acts as the Nucleophile in catalysis. Residues 176–179 (RSAD), N187, and 217–219 (HIY) each bind dUMP. D179 is a (6R)-5,10-methylene-5,6,7,8-tetrahydrofolate binding site. S273 is a (6R)-5,10-methylene-5,6,7,8-tetrahydrofolate binding site.

This sequence belongs to the thymidylate synthase family. Bacterial-type ThyA subfamily. As to quaternary structure, homodimer.

Its subcellular location is the cytoplasm. It carries out the reaction dUMP + (6R)-5,10-methylene-5,6,7,8-tetrahydrofolate = 7,8-dihydrofolate + dTMP. Its pathway is pyrimidine metabolism; dTTP biosynthesis. Functionally, catalyzes the reductive methylation of 2'-deoxyuridine-5'-monophosphate (dUMP) to 2'-deoxythymidine-5'-monophosphate (dTMP) while utilizing 5,10-methylenetetrahydrofolate (mTHF) as the methyl donor and reductant in the reaction, yielding dihydrofolate (DHF) as a by-product. This enzymatic reaction provides an intracellular de novo source of dTMP, an essential precursor for DNA biosynthesis. The sequence is that of Thymidylate synthase from Francisella tularensis subsp. novicida (strain U112).